Consider the following 115-residue polypeptide: U3-lycotoxin-Ls1k (115 aa).

An N-terminal signal peptide occupies residues 1–20 (MKSVLLFGVLLVTLFSYSSA). The propeptide occupies 21-44 (EMLDDFDQADEDELLSLIEKEEAR). 4 cysteine pairs are disulfide-bonded: cysteine 48/cysteine 63, cysteine 55/cysteine 72, cysteine 62/cysteine 87, and cysteine 74/cysteine 85.

It belongs to the neurotoxin 19 (CSTX) family. 01 subfamily. In terms of tissue distribution, expressed by the venom gland.

Its subcellular location is the secreted. The protein is U3-lycotoxin-Ls1k of Lycosa singoriensis (Wolf spider).